Reading from the N-terminus, the 337-residue chain is MSIISIAVDAMGGDFAPEAVIGGLDFALTNLLDNKDVSFNIYGQESQVLPMLDKYKNVKEHSLFIDTPDIVLANDKPSFALRKRKSSSMWCAIESIKNGVTSGVVSSGNTGALMAISCFVLGTLPNIKRPAICCALPSKCERYFVILDLGANVDCSANSLFQFAIMGNAFAKAVLNVPNPKVALLNVGEEEVKGTDVIREAFLLLRQAESSINFCGYIEPINMLGGEVDVVVADGFCGNVVLKVAESIAYIFKSVFEKSVSSSIITKIAGLLLKSSMKRNFMKFNPKIYNGAMLVGLNGVVVKSHGNADKIAFAHAVKVAVNAARNNINAKIIHELG.

This sequence belongs to the PlsX family. As to quaternary structure, homodimer. Probably interacts with PlsY.

The protein resides in the cytoplasm. It catalyses the reaction a fatty acyl-[ACP] + phosphate = an acyl phosphate + holo-[ACP]. It participates in lipid metabolism; phospholipid metabolism. In terms of biological role, catalyzes the reversible formation of acyl-phosphate (acyl-PO(4)) from acyl-[acyl-carrier-protein] (acyl-ACP). This enzyme utilizes acyl-ACP as fatty acyl donor, but not acyl-CoA. The protein is Phosphate acyltransferase of Ehrlichia canis (strain Jake).